The chain runs to 101 residues: MAKLALIEREKKRARLVAKFAAKREALKAIVEDQSKSEEERYEARLELQQLPRNSNPTRQRNRCAITGRPRGTFRKFGLARNKIREIAFRGEIPGLTKASW.

The protein belongs to the universal ribosomal protein uS14 family. As to quaternary structure, part of the 30S ribosomal subunit. Contacts proteins S3 and S10.

Its function is as follows. Binds 16S rRNA, required for the assembly of 30S particles and may also be responsible for determining the conformation of the 16S rRNA at the A site. The protein is Small ribosomal subunit protein uS14 of Burkholderia vietnamiensis (strain G4 / LMG 22486) (Burkholderia cepacia (strain R1808)).